Consider the following 98-residue polypeptide: Hainantoxin-XVII-2 (98 aa).

A signal peptide spans 1 to 40 (MTTVGVSLFRRSPEKITMKIATFLGLSFLLIASYVLICEA). The propeptide occupies 41-64 (QHPGFQELLILEENMRDPENSKER). Intrachain disulfides connect Cys66–Cys81 and Cys73–Cys85.

The protein belongs to the hainantoxin family. 17 subfamily. Expressed by the venom gland.

It localises to the secreted. Putative ion channel inhibitor. The polypeptide is Hainantoxin-XVII-2 (Cyriopagopus hainanus (Chinese bird spider)).